Here is an 86-residue protein sequence, read N- to C-terminus: uncharacterized protein (86 aa).

TPR repeat units lie at residues 8-41 (AEYY…NPFY) and 42-75 (RDAW…EKHL).

This is an uncharacterized protein from Methanocaldococcus jannaschii (strain ATCC 43067 / DSM 2661 / JAL-1 / JCM 10045 / NBRC 100440) (Methanococcus jannaschii).